The primary structure comprises 466 residues: ATP synthase subunit beta (466 aa).

An ATP-binding site is contributed by 153-160; it reads GGAGVGKT.

It belongs to the ATPase alpha/beta chains family. In terms of assembly, F-type ATPases have 2 components, CF(1) - the catalytic core - and CF(0) - the membrane proton channel. CF(1) has five subunits: alpha(3), beta(3), gamma(1), delta(1), epsilon(1). CF(0) has three main subunits: a(1), b(2) and c(9-12). The alpha and beta chains form an alternating ring which encloses part of the gamma chain. CF(1) is attached to CF(0) by a central stalk formed by the gamma and epsilon chains, while a peripheral stalk is formed by the delta and b chains.

Its subcellular location is the cell membrane. It carries out the reaction ATP + H2O + 4 H(+)(in) = ADP + phosphate + 5 H(+)(out). Functionally, produces ATP from ADP in the presence of a proton gradient across the membrane. The catalytic sites are hosted primarily by the beta subunits. In Oenococcus oeni (strain ATCC BAA-331 / PSU-1), this protein is ATP synthase subunit beta.